A 743-amino-acid chain; its full sequence is Type VI secretion system spike protein VgrG1 (743 aa).

Belongs to the VgrG protein family.

It localises to the secreted. The enzyme catalyses L-arginyl-[protein] + NAD(+) = N(omega)-(ADP-D-ribosyl)-L-arginyl-[protein] + nicotinamide + H(+). Functionally, part of the type VI secretion system specialized secretion system, which delivers several virulence factors in both prokaryotic and eukaryotic cells during infection. Acts directly as an secreted effector with an actin ADP-ribosyltransferase activity that disrupts the host actin cytoskeleton, leading to a decrease in host cell viability and an increase in apoptosis. The polypeptide is Type VI secretion system spike protein VgrG1 (vgrG1) (Aeromonas hydrophila subsp. hydrophila (strain ATCC 7966 / DSM 30187 / BCRC 13018 / CCUG 14551 / JCM 1027 / KCTC 2358 / NCIMB 9240 / NCTC 8049)).